Consider the following 176-residue polypeptide: 2-C-methyl-D-erythritol 2,4-cyclodiphosphate synthase (176 aa).

Positions 22 and 24 each coordinate a divalent metal cation. Residues 22–24 (DVH) and 48–49 (HS) each bind 4-CDP-2-C-methyl-D-erythritol 2-phosphate. Residue His-56 coordinates a divalent metal cation. 4-CDP-2-C-methyl-D-erythritol 2-phosphate contacts are provided by residues 70–72 (DIG), 146–149 (TTSE), Phe-153, and Arg-156.

This sequence belongs to the IspF family. As to quaternary structure, homotrimer. A divalent metal cation serves as cofactor.

The enzyme catalyses 4-CDP-2-C-methyl-D-erythritol 2-phosphate = 2-C-methyl-D-erythritol 2,4-cyclic diphosphate + CMP. It participates in isoprenoid biosynthesis; isopentenyl diphosphate biosynthesis via DXP pathway; isopentenyl diphosphate from 1-deoxy-D-xylulose 5-phosphate: step 4/6. Functionally, involved in the biosynthesis of isopentenyl diphosphate (IPP) and dimethylallyl diphosphate (DMAPP), two major building blocks of isoprenoid compounds. Catalyzes the conversion of 4-diphosphocytidyl-2-C-methyl-D-erythritol 2-phosphate (CDP-ME2P) to 2-C-methyl-D-erythritol 2,4-cyclodiphosphate (ME-CPP) with a corresponding release of cytidine 5-monophosphate (CMP). This is 2-C-methyl-D-erythritol 2,4-cyclodiphosphate synthase from Xylella fastidiosa (strain 9a5c).